We begin with the raw amino-acid sequence, 603 residues long: Ankyrin repeat and LEM domain-containing protein 2 homolog (603 aa).

A helical; Signal-anchor for type III membrane protein membrane pass occupies residues 2 to 22; that stretch reads GRKSAILAVILAIIYFRSNFS. 2 ANK repeats span residues 161–190 and 221–250; these read FRYNALHIAAKAGQTEIIAKILELIQNIDF and NSDTPLHFASKFGKIGVVRVLTENSATDRT. Disordered regions lie at residues 446-465 and 505-538; these read ISENLTPDGSDSADDEDDDD and LPPPPPPQWSNSPNFDYSEGEDSFATPPTTPPPT. Residues 456-465 show a composition bias toward acidic residues; it reads DSADDEDDDD.

The protein belongs to the ANKLE2 family. As to quaternary structure, interacts with baf-1. Interacts with protein phosphatase 2A (PP2A) components.

Its subcellular location is the nucleus membrane. In terms of biological role, involved in mitotic nuclear envelope reassembly by promoting dephosphorylation of baf-1 during mitotic exit. Coordinates the control of baf-1 dephosphorylation by inhibiting VRK1 kinase and promoting dephosphorylation of baf-1 by protein phosphatase 2A (PP2A), thereby facilitating nuclear envelope assembly. It is unclear whether it acts as a real PP2A regulatory subunit or whether it is involved in recruitment of the PP2A complex. This chain is Ankyrin repeat and LEM domain-containing protein 2 homolog (lem-4), found in Caenorhabditis elegans.